A 448-amino-acid chain; its full sequence is Tubulin beta-2 chain (448 aa).

Residues Q11, E69, S138, G142, T143, G144, N204, and N226 each contribute to the GTP site. E69 serves as a coordination point for Mg(2+). The tract at residues 421-448 is disordered; that stretch reads EYQQYQDATADEDGEYEDELDGQEEEDM. Residues 429–448 show a composition bias toward acidic residues; that stretch reads TADEDGEYEDELDGQEEEDM.

Belongs to the tubulin family. In terms of assembly, dimer of alpha and beta chains. A typical microtubule is a hollow water-filled tube with an outer diameter of 25 nm and an inner diameter of 15 nM. Alpha-beta heterodimers associate head-to-tail to form protofilaments running lengthwise along the microtubule wall with the beta-tubulin subunit facing the microtubule plus end conferring a structural polarity. Microtubules usually have 13 protofilaments but different protofilament numbers can be found in some organisms and specialized cells. Requires Mg(2+) as cofactor.

Its subcellular location is the cytoplasm. The protein resides in the cytoskeleton. Its function is as follows. Tubulin is the major constituent of microtubules, a cylinder consisting of laterally associated linear protofilaments composed of alpha- and beta-tubulin heterodimers. Microtubules grow by the addition of GTP-tubulin dimers to the microtubule end, where a stabilizing cap forms. Below the cap, tubulin dimers are in GDP-bound state, owing to GTPase activity of alpha-tubulin. The protein is Tubulin beta-2 chain (TUBB2) of Eleusine indica (Goosegrass).